The chain runs to 70 residues: Putative membrane protein insertion efficiency factor (70 aa).

It belongs to the UPF0161 family.

The protein localises to the cell inner membrane. Its function is as follows. Could be involved in insertion of integral membrane proteins into the membrane. This chain is Putative membrane protein insertion efficiency factor, found in Desulforapulum autotrophicum (strain ATCC 43914 / DSM 3382 / VKM B-1955 / HRM2) (Desulfobacterium autotrophicum).